We begin with the raw amino-acid sequence, 683 residues long: Protein kinase C eta type (683 aa).

Residues 1-118 (MSSGTMKFNG…LRTTGASDTF (118 aa)) enclose the C2 domain. Residues Ser-28 and Ser-32 each carry the phosphoserine; by autocatalysis modification. Phorbol-ester/DAG-type zinc fingers lie at residues 171–222 (GHKF…VTAC) and 245–295 (PHKF…APNC). Ser-317 carries the post-translational modification Phosphoserine. The segment at 320 to 342 (SKLVSRSTLRRQGKESSKEGNGI) is disordered. The Protein kinase domain maps to 355–614 (FEFIRVLGKG…EHAILRHPFF (260 aa)). Residues 361–369 (LGKGSFGKV) and Lys-384 each bind ATP. The Proton acceptor role is filled by Asp-479. Thr-513 carries the phosphothreonine; by PDPK1 modification. The 69-residue stretch at 615-683 (KEIDWAQLNH…FSYVSPELQP (69 aa)) folds into the AGC-kinase C-terminal domain. Thr-656 carries the post-translational modification Phosphothreonine. A Phosphoserine modification is found at Ser-675.

Belongs to the protein kinase superfamily. AGC Ser/Thr protein kinase family. PKC subfamily. As to quaternary structure, interacts with FYN. Interacts with RALA. Interacts with DGKQ. Interacts with PRKCH upstream open reading frame 2; the interaction leads to inhibition of kinase activity. Most abundant in lung, less in heart and skin.

Its subcellular location is the cytoplasm. The catalysed reaction is L-seryl-[protein] + ATP = O-phospho-L-seryl-[protein] + ADP + H(+). It catalyses the reaction L-threonyl-[protein] + ATP = O-phospho-L-threonyl-[protein] + ADP + H(+). Its activity is regulated as follows. Novel PKCs (PRKCD, PRKCE, PRKCH and PRKCQ) are calcium-insensitive, but activated by diacylglycerol (DAG) and phosphatidylserine. Three specific sites; Thr-513 (activation loop of the kinase domain), Thr-656 (turn motif) and Ser-675 (hydrophobic region), need to be phosphorylated for its full activation. Inhibited by PRKCH upstream open reading frame 2. Calcium-independent, phospholipid- and diacylglycerol (DAG)-dependent serine/threonine-protein kinase that is involved in the regulation of cell differentiation in keratinocytes and pre-B cell receptor, mediates regulation of epithelial tight junction integrity and foam cell formation, and is required for glioblastoma proliferation and apoptosis prevention in MCF-7 cells. In keratinocytes, binds and activates the tyrosine kinase FYN, which in turn blocks epidermal growth factor receptor (EGFR) signaling and leads to keratinocyte growth arrest and differentiation. Associates with the cyclin CCNE1-CDK2-CDKN1B complex and inhibits CDK2 kinase activity, leading to RB1 dephosphorylation and thereby G1 arrest in keratinocytes. In association with RALA activates actin depolymerization, which is necessary for keratinocyte differentiation. In the pre-B cell receptor signaling, functions downstream of BLNK by up-regulating IRF4, which in turn activates L chain gene rearrangement. Regulates epithelial tight junctions (TJs) by phosphorylating occludin (OCLN) on threonine residues, which is necessary for the assembly and maintenance of TJs. In association with PLD2 and via TLR4 signaling, is involved in lipopolysaccharide (LPS)-induced RGS2 down-regulation and foam cell formation. Upon PMA stimulation, mediates glioblastoma cell proliferation by activating the mTOR pathway, the PI3K/AKT pathway and the ERK1-dependent phosphorylation of ELK1. Involved in the protection of glioblastoma cells from irradiation-induced apoptosis by preventing caspase-9 activation. In camptothecin-treated MCF-7 cells, regulates NF-kappa-B upstream signaling by activating IKBKB, and confers protection against DNA damage-induced apoptosis. Promotes oncogenic functions of ATF2 in the nucleus while blocking its apoptotic function at mitochondria. Phosphorylates ATF2 which promotes its nuclear retention and transcriptional activity and negatively regulates its mitochondrial localization. The sequence is that of Protein kinase C eta type (PRKCH) from Homo sapiens (Human).